The primary structure comprises 299 residues: tRNA dimethylallyltransferase (299 aa).

ATP is bound at residue 11–18 (GPTAVGKT). Position 13–18 (13–18 (TAVGKT)) interacts with substrate. The segment at 36-39 (DSQQ) is interaction with substrate tRNA.

The protein belongs to the IPP transferase family. As to quaternary structure, monomer. It depends on Mg(2+) as a cofactor.

It carries out the reaction adenosine(37) in tRNA + dimethylallyl diphosphate = N(6)-dimethylallyladenosine(37) in tRNA + diphosphate. Catalyzes the transfer of a dimethylallyl group onto the adenine at position 37 in tRNAs that read codons beginning with uridine, leading to the formation of N6-(dimethylallyl)adenosine (i(6)A). The sequence is that of tRNA dimethylallyltransferase from Streptococcus pyogenes serotype M6 (strain ATCC BAA-946 / MGAS10394).